The following is a 251-amino-acid chain: Ubiquinone/menaquinone biosynthesis C-methyltransferase UbiE (251 aa).

S-adenosyl-L-methionine-binding positions include T74, D95, 123-124 (NA), and S140.

The protein belongs to the class I-like SAM-binding methyltransferase superfamily. MenG/UbiE family.

It carries out the reaction a 2-demethylmenaquinol + S-adenosyl-L-methionine = a menaquinol + S-adenosyl-L-homocysteine + H(+). The enzyme catalyses a 2-methoxy-6-(all-trans-polyprenyl)benzene-1,4-diol + S-adenosyl-L-methionine = a 5-methoxy-2-methyl-3-(all-trans-polyprenyl)benzene-1,4-diol + S-adenosyl-L-homocysteine + H(+). The protein operates within quinol/quinone metabolism; menaquinone biosynthesis; menaquinol from 1,4-dihydroxy-2-naphthoate: step 2/2. It participates in cofactor biosynthesis; ubiquinone biosynthesis. Its function is as follows. Methyltransferase required for the conversion of demethylmenaquinol (DMKH2) to menaquinol (MKH2) and the conversion of 2-polyprenyl-6-methoxy-1,4-benzoquinol (DDMQH2) to 2-polyprenyl-3-methyl-6-methoxy-1,4-benzoquinol (DMQH2). This chain is Ubiquinone/menaquinone biosynthesis C-methyltransferase UbiE, found in Yersinia pestis bv. Antiqua (strain Angola).